The sequence spans 88 residues: Small ribosomal subunit protein uS17 (88 aa).

Belongs to the universal ribosomal protein uS17 family. Part of the 30S ribosomal subunit.

Its function is as follows. One of the primary rRNA binding proteins, it binds specifically to the 5'-end of 16S ribosomal RNA. In Brevibacillus brevis (strain 47 / JCM 6285 / NBRC 100599), this protein is Small ribosomal subunit protein uS17.